Here is a 350-residue protein sequence, read N- to C-terminus: tRNA uridine(34) hydroxylase (350 aa).

In terms of domain architecture, Rhodanese spans 146-240 (DDPDAVFIDM…YARRAREQGL (95 aa)). The active-site Cysteine persulfide intermediate is the Cys200. Residues 319 to 328 (RRRRAGRENG) show a composition bias toward basic and acidic residues. The disordered stretch occupies residues 319–350 (RRRRAGRENGNKIFNKSRGRLNSKLSIPDPAE).

The protein belongs to the TrhO family.

The catalysed reaction is uridine(34) in tRNA + AH2 + O2 = 5-hydroxyuridine(34) in tRNA + A + H2O. Its function is as follows. Catalyzes oxygen-dependent 5-hydroxyuridine (ho5U) modification at position 34 in tRNAs. The polypeptide is tRNA uridine(34) hydroxylase (Salmonella heidelberg (strain SL476)).